The chain runs to 258 residues: 14-3-3 protein 6 (258 aa).

The disordered stretch occupies residues 238-258 (DMQDDGTDEIKEATPKPDDNE). Residues 245–258 (DEIKEATPKPDDNE) show a composition bias toward basic and acidic residues.

This sequence belongs to the 14-3-3 family. In terms of assembly, homodimer.

The polypeptide is 14-3-3 protein 6 (TFT6) (Solanum lycopersicum (Tomato)).